Consider the following 303-residue polypeptide: CDAN1-interacting nuclease 1 (303 aa).

Its subcellular location is the nucleus. The protein resides in the cytoplasm. In terms of biological role, may play a role in erythroid cell differentiation. The protein is CDAN1-interacting nuclease 1 (cdin1) of Xenopus tropicalis (Western clawed frog).